Consider the following 171-residue polypeptide: Putative pre-16S rRNA nuclease (171 aa).

The protein belongs to the YqgF nuclease family.

It localises to the cytoplasm. Its function is as follows. Could be a nuclease involved in processing of the 5'-end of pre-16S rRNA. In Corynebacterium diphtheriae (strain ATCC 700971 / NCTC 13129 / Biotype gravis), this protein is Putative pre-16S rRNA nuclease.